A 405-amino-acid chain; its full sequence is S-adenosylmethionine synthase (405 aa).

Residue 141 to 146 (GQGSVD) coordinates ATP.

Belongs to the AdoMet synthase 2 family. Requires Mg(2+) as cofactor.

The catalysed reaction is L-methionine + ATP + H2O = S-adenosyl-L-methionine + phosphate + diphosphate. It participates in amino-acid biosynthesis; S-adenosyl-L-methionine biosynthesis; S-adenosyl-L-methionine from L-methionine: step 1/1. In terms of biological role, catalyzes the formation of S-adenosylmethionine from methionine and ATP. The polypeptide is S-adenosylmethionine synthase (Methanococcus maripaludis (strain C5 / ATCC BAA-1333)).